The primary structure comprises 550 residues: DNA-directed RNA polymerase subunit alpha (550 aa).

Residues 1 to 333 (MTIYPNLKKI…QENNLFRSEK (333 aa)) are alpha N-terminal domain (alpha-NTD). Residues 185-258 (TTLKKRNILL…TSLGHDTVSN (74 aa)) are insert. The alpha C-terminal domain (alpha-CTD) stretch occupies residues 378-550 (FLNQSLGQNK…SLTFEYARKF (173 aa)).

It belongs to the RNA polymerase alpha chain family. As to quaternary structure, in plastids the minimal PEP RNA polymerase catalytic core is composed of four subunits: alpha, beta, beta', and beta''. When a (nuclear-encoded) sigma factor is associated with the core the holoenzyme is formed, which can initiate transcription.

Its subcellular location is the plastid. It is found in the chloroplast. It catalyses the reaction RNA(n) + a ribonucleoside 5'-triphosphate = RNA(n+1) + diphosphate. Its function is as follows. DNA-dependent RNA polymerase catalyzes the transcription of DNA into RNA using the four ribonucleoside triphosphates as substrates. This Chlamydomonas reinhardtii (Chlamydomonas smithii) protein is DNA-directed RNA polymerase subunit alpha (rpoA).